A 615-amino-acid chain; its full sequence is Delta(14)-sterol reductase LBR (615 aa).

Positions 1–62 constitute a Tudor domain; it reads MPSRKFADGE…DIKPLTSFRQ (62 aa). Residues 1-211 lie on the Nuclear side of the membrane; that stretch reads MPSRKFADGE…IRAKDLEFGG (211 aa). The segment at 53–109 is disordered; the sequence is DIKPLTSFRQRKGGSTSSSPSRRRGSRSRSRSRSPGRPPKSARRSASASHQADIKEA. Lys55 carries the N6-acetyllysine modification. Position 58 is a phosphothreonine (Thr58). Phosphoserine occurs at positions 59 and 67. Residues Ser71 and Ser86 each carry the phosphoserine; by CDK1 modification. Residues 73–86 are compositionally biased toward basic residues; it reads SRRRGSRSRSRSRS. Residues Ser97 and Ser99 each carry the phosphoserine modification. Thr118 bears the Phosphothreonine mark. Ser128 carries the phosphoserine modification. Position 200 is a phosphothreonine (Thr200). Transmembrane regions (helical) follow at residues 212-232, 258-278, 299-319, 326-346, 415-435, 447-467, 481-501, and 561-581; these read VPGV…LLLM, VFGV…LPIG, FYAF…GVEF, FLQF…YLYM, VPSL…VDAL, IIHD…VPFI, EVSW…YVIF, and ACGF…MLLV. N6-acetyllysine occurs at positions 594 and 601.

The protein belongs to the ERG4/ERG24 family. As to quaternary structure, interacts with CBX5. Interacts with DNA. Interaction with DNA is sequence independent with higher affinity for supercoiled and relaxed circular DNA than linear DNA. Interacts with lamin B. Interacts with CLNK. Interacts with TMEM147; promoting LBR localization to the nucleus inner membrane. Post-translationally, phosphorylated by CDK1 in mitosis when the inner nuclear membrane breaks down into vesicles that dissociate from the lamina and the chromatin. It is phosphorylated by different protein kinases in interphase when the membrane is associated with these structures. Phosphorylation of LBR and HP1 proteins may be responsible for some of the alterations in chromatin organization and nuclear structure which occur at various times during the cell cycle. Phosphorylated by SRPK1. In late anaphase LBR is dephosphorylated, probably by PP1 and/or PP2A, allowing reassociation with chromatin.

The protein localises to the nucleus inner membrane. The protein resides in the nucleus. Its subcellular location is the cytoplasm. It is found in the endoplasmic reticulum membrane. The catalysed reaction is 5alpha-cholest-8,14-dien-3beta-ol + NADPH + H(+) = 5alpha-cholest-8-en-3beta-ol + NADP(+). It carries out the reaction 4,4-dimethyl-5alpha-cholesta-8,24-dien-3beta-ol + NADP(+) = 4,4-dimethyl-5alpha-cholesta-8,14,24-trien-3beta-ol + NADPH + H(+). It catalyses the reaction 4,4-dimethyl-8,14-cholestadien-3beta-ol + NADPH + H(+) = 4,4-dimethyl-5alpha-cholest-8-en-3beta-ol + NADP(+). It functions in the pathway steroid biosynthesis; cholesterol biosynthesis. Catalyzes the reduction of the C14-unsaturated bond of lanosterol, as part of the metabolic pathway leading to cholesterol biosynthesis. Plays a critical role in myeloid cell cholesterol biosynthesis which is essential to both myeloid cell growth and functional maturation. Mediates the activation of NADPH oxidases, perhaps by maintaining critical levels of cholesterol required for membrane lipid raft formation during neutrophil differentiation. Anchors the lamina and the heterochromatin to the inner nuclear membrane. The sequence is that of Delta(14)-sterol reductase LBR (LBR) from Pongo abelii (Sumatran orangutan).